We begin with the raw amino-acid sequence, 191 residues long: Thymidine kinase (191 aa).

ATP is bound by residues 15 to 22 (GSMFSGKS) and 88 to 91 (DEVQ). Catalysis depends on E89, which acts as the Proton acceptor. C145, C148, C183, and H186 together coordinate Zn(2+).

Belongs to the thymidine kinase family. Homotetramer.

The protein resides in the cytoplasm. It catalyses the reaction thymidine + ATP = dTMP + ADP + H(+). This Macrococcus caseolyticus (strain JCSC5402) (Macrococcoides caseolyticum) protein is Thymidine kinase.